Here is a 686-residue protein sequence, read N- to C-terminus: MADRDVQARAAALRREIERHNYAYYVLDAPTIPDAEYDRLYHELEALEAAHPELVAADSPTRRVGGQPLAGFKPVRHAVPMLSIRTETDTTAAGARAFDVRVRKELGLAPADPPVEYAAELKFDGLAINLRYEAGVLVAAATRGDGETGEDVTQNVRTVRTIPLRLHGDAPPAVLEVRGEVFMRRDDFERYNAQQRAAGKPTLVNPRNGAAGSIRQLDPAIAGQRPLSFYAYGLGEVVGWPDAPATHGATLDALQGLGVPVSAERCVCNGVDDLIAFHDDIAARRDQLPFDIDGVVYKVNAFALQRELGFLTREPRWAVAHKYPAQEQLTTVLGIGVHVGRTGALTPVARLAPVFVGGVTVTNATLHNQDEIDRKDTRVGDTVIVRRAGDVIPEIVATVLERRPQPEPPRFNILQSYPVCPECGSHVVRLEGEAVARCTGGLYCPAQRKQALLHFASRRAMDIDGVGEKLVDQLVSRELVRTPADLYRLPLETLAGLERMAEKSARNLIQAIETSKSTTLARFIYALGIRNVGETTARDLARHFGALDALLGANETALLGVRDVGPIVAQSIAQFFAEPHNLEVVGKLRALGVHWPETTGMQQSGGILSGKTLVLTGTLPALTRDQAKERIESAGGKVAGSVSKKTDYVVAGEEAGSKLAKARELGVTILDEEELLALLGSNKKNG.

NAD(+) is bound by residues 34 to 38, 83 to 84, and Glu120; these read DAEYD and SI. Lys122 functions as the N6-AMP-lysine intermediate in the catalytic mechanism. 4 residues coordinate NAD(+): Arg143, Glu180, Lys298, and Lys322. Zn(2+) contacts are provided by Cys420, Cys423, Cys438, and Cys444. In terms of domain architecture, BRCT spans 603–686; it reads QSGGILSGKT…ALLGSNKKNG (84 aa).

It belongs to the NAD-dependent DNA ligase family. LigA subfamily. It depends on Mg(2+) as a cofactor. Requires Mn(2+) as cofactor.

The catalysed reaction is NAD(+) + (deoxyribonucleotide)n-3'-hydroxyl + 5'-phospho-(deoxyribonucleotide)m = (deoxyribonucleotide)n+m + AMP + beta-nicotinamide D-nucleotide.. Its function is as follows. DNA ligase that catalyzes the formation of phosphodiester linkages between 5'-phosphoryl and 3'-hydroxyl groups in double-stranded DNA using NAD as a coenzyme and as the energy source for the reaction. It is essential for DNA replication and repair of damaged DNA. The polypeptide is DNA ligase (Thiobacillus denitrificans (strain ATCC 25259 / T1)).